The primary structure comprises 223 residues: Putative N-acetylmannosamine-6-phosphate 2-epimerase (223 aa).

Belongs to the NanE family.

The catalysed reaction is an N-acyl-D-glucosamine 6-phosphate = an N-acyl-D-mannosamine 6-phosphate. It participates in amino-sugar metabolism; N-acetylneuraminate degradation; D-fructose 6-phosphate from N-acetylneuraminate: step 3/5. Converts N-acetylmannosamine-6-phosphate (ManNAc-6-P) to N-acetylglucosamine-6-phosphate (GlcNAc-6-P). The sequence is that of Putative N-acetylmannosamine-6-phosphate 2-epimerase from Staphylococcus haemolyticus (strain JCSC1435).